The following is a 725-amino-acid chain: Aminopeptidase RNPEPL1 (725 aa).

326 to 330 is a binding site for substrate; that stretch reads VAMEN. A Zn(2+)-binding site is contributed by histidine 353. Glutamate 354 serves as the catalytic Proton acceptor. Zn(2+) is bound by residues histidine 357 and glutamate 376. Residues 676–699 are disordered; sequence GLGSSTEPASEPSTELGKAEADTD. Residues 679–690 show a composition bias toward low complexity; that stretch reads SSTEPASEPSTE.

It belongs to the peptidase M1 family. Zn(2+) is required as a cofactor. Ubiquitously expressed. Expressed at relatively higher levels in heart and skeletal muscle.

It carries out the reaction Release of N-terminal amino acids, preferentially methionine, from peptides and arylamides.. Its activity is regulated as follows. Inhibited by calcium but not affected by chloride ions. Inhibited by amastatin and to a lower extent by bestatin. Weakly inhibited by puromycin. Broad specificity aminopeptidase which preferentially hydrolyzes an N-terminal methionine, citrulline or glutamine. This is Aminopeptidase RNPEPL1 from Homo sapiens (Human).